Consider the following 118-residue polypeptide: Ribosome-binding factor A (118 aa).

The protein belongs to the RbfA family. Monomer. Binds 30S ribosomal subunits, but not 50S ribosomal subunits or 70S ribosomes.

The protein localises to the cytoplasm. Its function is as follows. One of several proteins that assist in the late maturation steps of the functional core of the 30S ribosomal subunit. Associates with free 30S ribosomal subunits (but not with 30S subunits that are part of 70S ribosomes or polysomes). Required for efficient processing of 16S rRNA. May interact with the 5'-terminal helix region of 16S rRNA. This Streptococcus pyogenes serotype M1 protein is Ribosome-binding factor A.